A 298-amino-acid chain; its full sequence is Ribosomal RNA small subunit methyltransferase A (298 aa).

S-adenosyl-L-methionine is bound by residues Asn35, Leu37, Gly62, Glu83, Asp108, and Asn133.

This sequence belongs to the class I-like SAM-binding methyltransferase superfamily. rRNA adenine N(6)-methyltransferase family. RsmA subfamily.

Its subcellular location is the cytoplasm. It carries out the reaction adenosine(1518)/adenosine(1519) in 16S rRNA + 4 S-adenosyl-L-methionine = N(6)-dimethyladenosine(1518)/N(6)-dimethyladenosine(1519) in 16S rRNA + 4 S-adenosyl-L-homocysteine + 4 H(+). Functionally, specifically dimethylates two adjacent adenosines (A1518 and A1519) in the loop of a conserved hairpin near the 3'-end of 16S rRNA in the 30S particle. May play a critical role in biogenesis of 30S subunits. The protein is Ribosomal RNA small subunit methyltransferase A of Streptococcus pyogenes serotype M4 (strain MGAS10750).